The primary structure comprises 315 residues: UDP-3-O-acyl-N-acetylglucosamine deacetylase (315 aa).

The Zn(2+) site is built by H78, H235, and D239. The active-site Proton donor is H262.

The protein belongs to the LpxC family. Zn(2+) is required as a cofactor.

The catalysed reaction is a UDP-3-O-[(3R)-3-hydroxyacyl]-N-acetyl-alpha-D-glucosamine + H2O = a UDP-3-O-[(3R)-3-hydroxyacyl]-alpha-D-glucosamine + acetate. It participates in glycolipid biosynthesis; lipid IV(A) biosynthesis; lipid IV(A) from (3R)-3-hydroxytetradecanoyl-[acyl-carrier-protein] and UDP-N-acetyl-alpha-D-glucosamine: step 2/6. Catalyzes the hydrolysis of UDP-3-O-myristoyl-N-acetylglucosamine to form UDP-3-O-myristoylglucosamine and acetate, the committed step in lipid A biosynthesis. The protein is UDP-3-O-acyl-N-acetylglucosamine deacetylase of Syntrophus aciditrophicus (strain SB).